Reading from the N-terminus, the 567-residue chain is Probable E3 ubiquitin-protein ligase ARI8 (567 aa).

Residues 1 to 27 form a disordered region; sequence MEADDDFYSGTENYSDYADSDEDDADG. Positions 18-27 are enriched in acidic residues; sequence ADSDEDDADG. The tract at residues 124–337 is TRIAD supradomain; sequence GELDCGICFE…GGFYACNRYE (214 aa). Residues Cys128, Cys131, Cys145, His147, Cys150, Cys153, Cys173, Cys178, Cys217, Cys222, Cys239, Cys241, Cys246, Cys249, His254, Cys259, Cys286, and Cys289 each coordinate Zn(2+). Residues 128-178 form an RING-type 1 zinc finger; the sequence is CGICFETFLSDKLHAAACGHPFCDSCWEGYITTAINDGPGCLTLRCPDPSC. The IBR-type zinc-finger motif lies at 197–259; the sequence is QKYTSYFVRS…AEEAHRPVDC (63 aa). The RING-type 2; atypical zinc finger occupies 286 to 316; sequence CPKCKRPIEKNQGCMHITCTPPCKFEFCWLC. Cys299 is a catalytic residue. Residues Cys304, Cys308, Cys313, Cys316, His323, and Cys333 each coordinate Zn(2+). Residues 514–543 form a disordered region; it reads DAYDRTSSSKSLGGKTKGSSSKASSSDSSH. Residues 521–542 show a composition bias toward low complexity; sequence SSKSLGGKTKGSSSKASSSDSS. Residues 540-567 form a RanBP2-type zinc finger; sequence DSSHWPCEYCTYVNPRSTTICQMCEHGR.

Belongs to the RBR family. Ariadne subfamily. Zn(2+) is required as a cofactor. Ubiquitous.

The catalysed reaction is [E2 ubiquitin-conjugating enzyme]-S-ubiquitinyl-L-cysteine + [acceptor protein]-L-lysine = [E2 ubiquitin-conjugating enzyme]-L-cysteine + [acceptor protein]-N(6)-ubiquitinyl-L-lysine.. It functions in the pathway protein modification; protein ubiquitination. Its function is as follows. Might act as an E3 ubiquitin-protein ligase, or as part of E3 complex, which accepts ubiquitin from specific E2 ubiquitin-conjugating enzymes and then transfers it to substrates. This Arabidopsis thaliana (Mouse-ear cress) protein is Probable E3 ubiquitin-protein ligase ARI8 (ARI8).